We begin with the raw amino-acid sequence, 376 residues long: Transcription initiation factor IIA subunit 1 (376 aa).

An N-acetylalanine modification is found at alanine 2. 2 stretches are compositionally biased toward low complexity: residues 69 to 79 and 89 to 105; these read QVQQQHQPQQQ and QAQPQQTVPQQAQTQQV. Disordered regions lie at residues 69 to 107, 246 to 265, and 274 to 329; these read QVQQQHQPQQQQHHHHHHHQQAQPQQTVPQQAQTQQVLI, AQAQITATGHQQPQAQPAQT, and DGTG…QELF. Phosphoserine; by TAF1 is present on residues serine 280, serine 281, serine 316, and serine 321. The span at 280–329 shows a compositional bias: acidic residues; that stretch reads SSEEDEDEEEDYDDDEEEDKEKDGAEDGQVEEEPLNSEDDVSDEEGQELF. DNA is bound by residues histidine 343 and arginine 344.

The protein belongs to the TFIIA subunit 1 family. TFIIA is a heterodimer of the large unprocessed subunit 1 and a small subunit gamma. It was originally believed to be a heterotrimer of an alpha (p35), a beta (p19) and a gamma subunit (p12). TFIIA forms a complex with TBP. Part of TBP-based Pol II pre-initiation complex (PIC), in which Pol II core assembles with general transcription factors and other specific initiation factors including GTF2E1, GTF2E2, GTF2F1, GTF2F2, TCEA1, ERCC2, ERCC3, GTF2H2, GTF2H3, GTF2H4, GTF2H5, GTF2A1, GTF2A2, GTF2B and TBP; this large multi-subunit PIC complex mediates DNA unwinding and targets Pol II core to the transcription start site where the first phosphodiester bond forms. In terms of processing, the alpha and beta subunits are postranslationally produced from the precursor formby TASP1. The cleavage promotes proteasomal degradation.

The protein localises to the nucleus. TFIIA is a component of the transcription machinery of RNA polymerase II and plays an important role in transcriptional activation. TFIIA in a complex with TBP mediates transcriptional activity. This is Transcription initiation factor IIA subunit 1 (GTF2A1) from Pongo abelii (Sumatran orangutan).